We begin with the raw amino-acid sequence, 952 residues long: Pentatricopeptide repeat-containing protein At5g04810, chloroplastic (952 aa).

The N-terminal 60 residues, 1–60 (MDNGGSVLSLSAPHFPYSATILRRHSPVASISFSLKQPPPQPPEPPESPPDLRRPEKSIG), are a transit peptide targeting the chloroplast. Disordered stretches follow at residues 30-95 (SISF…VSPL) and 115-163 (LRLS…EFRQ). Residues 37–49 (QPPPQPPEPPESP) show a composition bias toward pro residues. Residues 58-68 (SIGSSSSSSSP) show a composition bias toward low complexity. Residues 122–133 (SPPPPPPPPPPV) show a composition bias toward pro residues. Positions 137-163 (TQFRDEFRSDTKPPEEETRNPQQEFRQ) are enriched in basic and acidic residues. The 72-residue stretch at 167–238 (IFVGNLPTWI…VEFHGRILTV (72 aa)) folds into the RRM domain. Positions 259–280 (EGEEDTKMSNKSSWHQEREGSR) are enriched in basic and acidic residues. The segment at 259-281 (EGEEDTKMSNKSSWHQEREGSRK) is disordered. PPR repeat units lie at residues 308-342 (SRTEFGLMVKFYGRRGDMHRARETFERMRARGITP), 343-377 (TSRIYTSLIHAYAVGRDMDEALSCVRKMKEEGIEM), 378-412 (SLVTYSVIVGGFSKAGHAEAADYWFDEAKRIHKTL), 413-447 (NASIYGKIIYAHCQTCNMERAEALVREMEEEGIDA), 448-482 (PIAIYHTMMDGYTMVADEKKGLVVFKRLKECGFTP), 483-517 (TVVTYGCLINLYTKVGKISKALEVSRVMKEEGVKH), 518-552 (NLKTYSMMINGFVKLKDWANAFAVFEDMVKEGMKP), 553-587 (DVILYNNIISAFCGMGNMDRAIQTVKEMQKLRHRP), 588-622 (TTRTFMPIIHGYAKSGDMRRSLEVFDMMRRCGCVP), 623-657 (TVHTFNGLINGLVEKRQMEKAVEILDEMTLAGVSA), 658-692 (NEHTYTKIMQGYASVGDTGKAFEYFTRLQNEGLDV), 693-727 (DIFTYEALLKACCKSGRMQSALAVTKEMSARNIPR), 728-762 (NSFVYNILIDGWARRGDVWEAADLIQQMKKEGVKP), 763-797 (DIHTYTSFISACSKAGDMNRATQTIEEMEALGVKP), and 798-832 (NIKTYTTLIKGWARASLPEKALSCYEEMKAMGIKP). Residues 918-952 (DQVSDVDSDEDDVDGEDGEDDEDVNSVSDLLSPYK) form a disordered region. Residues 921 to 941 (SDVDSDEDDVDGEDGEDDEDV) are compositionally biased toward acidic residues.

Belongs to the PPR family. P subfamily.

The protein localises to the plastid. The protein resides in the chloroplast. May play a role in the plastid ribosome biogenesis. The sequence is that of Pentatricopeptide repeat-containing protein At5g04810, chloroplastic (PPR4) from Arabidopsis thaliana (Mouse-ear cress).